A 243-amino-acid chain; its full sequence is 1-(5-phosphoribosyl)-5-[(5-phosphoribosylamino)methylideneamino] imidazole-4-carboxamide isomerase (243 aa).

Catalysis depends on Asp8, which acts as the Proton acceptor. Asp129 acts as the Proton donor in catalysis.

This sequence belongs to the HisA/HisF family.

It localises to the cytoplasm. The catalysed reaction is 1-(5-phospho-beta-D-ribosyl)-5-[(5-phospho-beta-D-ribosylamino)methylideneamino]imidazole-4-carboxamide = 5-[(5-phospho-1-deoxy-D-ribulos-1-ylimino)methylamino]-1-(5-phospho-beta-D-ribosyl)imidazole-4-carboxamide. The protein operates within amino-acid biosynthesis; L-histidine biosynthesis; L-histidine from 5-phospho-alpha-D-ribose 1-diphosphate: step 4/9. This is 1-(5-phosphoribosyl)-5-[(5-phosphoribosylamino)methylideneamino] imidazole-4-carboxamide isomerase from Syntrophotalea carbinolica (strain DSM 2380 / NBRC 103641 / GraBd1) (Pelobacter carbinolicus).